The primary structure comprises 546 residues: CTP synthase (546 aa).

The amidoligase domain stretch occupies residues 1–266 (MTTRYIFVTG…DELVVKRFSL (266 aa)). Residue Ser-14 participates in CTP binding. Ser-14 contributes to the UTP binding site. ATP-binding positions include 15 to 20 (SLGKGI) and Asp-72. The Mg(2+) site is built by Asp-72 and Glu-140. Residues 147–149 (DIE), 187–192 (KTKPTQ), and Lys-223 each bind CTP. UTP-binding positions include 187-192 (KTKPTQ) and Lys-223. 239–241 (KDV) lines the ATP pocket. The Glutamine amidotransferase type-1 domain maps to 291–542 (VIGMVGKYIE…VAAASAHQKR (252 aa)). Gly-352 is a binding site for L-glutamine. Cys-379 functions as the Nucleophile; for glutamine hydrolysis in the catalytic mechanism. L-glutamine-binding positions include 380–383 (LGMQ), Glu-403, and Arg-470. Residues His-515 and Glu-517 contribute to the active site.

This sequence belongs to the CTP synthase family. In terms of assembly, homotetramer.

It carries out the reaction UTP + L-glutamine + ATP + H2O = CTP + L-glutamate + ADP + phosphate + 2 H(+). The catalysed reaction is L-glutamine + H2O = L-glutamate + NH4(+). It catalyses the reaction UTP + NH4(+) + ATP = CTP + ADP + phosphate + 2 H(+). It participates in pyrimidine metabolism; CTP biosynthesis via de novo pathway; CTP from UDP: step 2/2. Allosterically activated by GTP, when glutamine is the substrate; GTP has no effect on the reaction when ammonia is the substrate. The allosteric effector GTP functions by stabilizing the protein conformation that binds the tetrahedral intermediate(s) formed during glutamine hydrolysis. Inhibited by the product CTP, via allosteric rather than competitive inhibition. Its function is as follows. Catalyzes the ATP-dependent amination of UTP to CTP with either L-glutamine or ammonia as the source of nitrogen. Regulates intracellular CTP levels through interactions with the four ribonucleotide triphosphates. The protein is CTP synthase of Shewanella oneidensis (strain ATCC 700550 / JCM 31522 / CIP 106686 / LMG 19005 / NCIMB 14063 / MR-1).